Consider the following 493-residue polypeptide: Proline--tRNA ligase (493 aa).

The protein belongs to the class-II aminoacyl-tRNA synthetase family. ProS type 3 subfamily. Homodimer.

It is found in the cytoplasm. It catalyses the reaction tRNA(Pro) + L-proline + ATP = L-prolyl-tRNA(Pro) + AMP + diphosphate. Its function is as follows. Catalyzes the attachment of proline to tRNA(Pro) in a two-step reaction: proline is first activated by ATP to form Pro-AMP and then transferred to the acceptor end of tRNA(Pro). The sequence is that of Proline--tRNA ligase from Azobacteroides pseudotrichonymphae genomovar. CFP2.